The following is a 99-amino-acid chain: UPF0213 protein SP_1535 (99 aa).

The GIY-YIG domain occupies H3 to E78.

It belongs to the UPF0213 family.

The protein is UPF0213 protein SP_1535 of Streptococcus pneumoniae serotype 4 (strain ATCC BAA-334 / TIGR4).